A 182-amino-acid polypeptide reads, in one-letter code: Bifunctional protein PyrR (182 aa).

The PRPP-binding motif lies at 98 to 110 (VVLVDDVLFTGRS).

It belongs to the purine/pyrimidine phosphoribosyltransferase family. PyrR subfamily.

The enzyme catalyses UMP + diphosphate = 5-phospho-alpha-D-ribose 1-diphosphate + uracil. Functionally, regulates the transcription of the pyrimidine nucleotide (pyr) operon in response to exogenous pyrimidines. In terms of biological role, also displays a weak uracil phosphoribosyltransferase activity which is not physiologically significant. The polypeptide is Bifunctional protein PyrR (Dehalococcoides mccartyi (strain ATCC BAA-2100 / JCM 16839 / KCTC 5957 / BAV1)).